The chain runs to 280 residues: uncharacterized protein (280 aa).

The next 6 membrane-spanning stretches (helical) occupy residues 3–23, 52–72, 81–101, 123–143, 196–216, and 233–253; these read ILITALEQSLIMLPLILGMYI, FGLFHALIFAIIAGGINGSIV, INGLIAGILANFMLYSVNLQI, NWLVPLILINSFIIVIVLILL, FADINMGYGVALVGIGAIIIG, and IFACFIGILFYFISLSILLHI.

It is found in the cell membrane. This is an uncharacterized protein from Rickettsia prowazekii (strain Madrid E).